We begin with the raw amino-acid sequence, 542 residues long: CTP synthase (542 aa).

Residues 1-265 (MARYVFITGG…DDEVLAAFGI (265 aa)) form an amidoligase domain region. CTP is bound at residue Ser13. A UTP-binding site is contributed by Ser13. ATP-binding positions include 14–19 (SLGKGI) and Asp71. Positions 71 and 139 each coordinate Mg(2+). CTP-binding positions include 146-148 (DIE), 186-191 (KTKPTQ), and Lys222. UTP is bound by residues 186-191 (KTKPTQ) and Lys222. The Glutamine amidotransferase type-1 domain maps to 291 to 541 (TIAIVGKYTG…IEAATEQSRL (251 aa)). Gly353 is an L-glutamine binding site. Cys380 serves as the catalytic Nucleophile; for glutamine hydrolysis. Residues 381–384 (FGMQ), Glu404, and Arg469 contribute to the L-glutamine site. Residues His514 and Glu516 contribute to the active site.

The protein belongs to the CTP synthase family. Homotetramer.

It catalyses the reaction UTP + L-glutamine + ATP + H2O = CTP + L-glutamate + ADP + phosphate + 2 H(+). The enzyme catalyses L-glutamine + H2O = L-glutamate + NH4(+). It carries out the reaction UTP + NH4(+) + ATP = CTP + ADP + phosphate + 2 H(+). The protein operates within pyrimidine metabolism; CTP biosynthesis via de novo pathway; CTP from UDP: step 2/2. With respect to regulation, allosterically activated by GTP, when glutamine is the substrate; GTP has no effect on the reaction when ammonia is the substrate. The allosteric effector GTP functions by stabilizing the protein conformation that binds the tetrahedral intermediate(s) formed during glutamine hydrolysis. Inhibited by the product CTP, via allosteric rather than competitive inhibition. In terms of biological role, catalyzes the ATP-dependent amination of UTP to CTP with either L-glutamine or ammonia as the source of nitrogen. Regulates intracellular CTP levels through interactions with the four ribonucleotide triphosphates. This Rhizobium johnstonii (strain DSM 114642 / LMG 32736 / 3841) (Rhizobium leguminosarum bv. viciae) protein is CTP synthase.